Here is a 339-residue protein sequence, read N- to C-terminus: DNA double-strand break repair nuclease NurA (339 aa).

Mn(2+) contacts are provided by Asp-58 and Asp-133.

Belongs to the NurA family. As to quaternary structure, homodimer. Forms a complex with HerA. Mn(2+) is required as a cofactor.

Its activity is regulated as follows. Nuclease activity requires the presence of HerA. Another report shows endo- and exonuclease activity in the absence of HerA; HerA stimulates the exo- but not endonuclease. LhrC-Core (Hel112) inhibits the exonuclease activity of the HerA-NurA complex on ss- and dsDNA, has no effect on the nicking activity of NurA. Endo- and exonuclease activities are inhibited by ATP; ATP may subtract divalent ions from the reaction preventing nuclease activity, HerA can alleviate ATP inhibition. Its function is as follows. Involved in DNA double-strand break (DSB) repair. Probably acts with HerA to stimulate resection of the 5' strand and produce the long 3' single-strand that is required for RadA loading. NurA and HerA together stimulate the end-resection of six nucleotides of a linear DNA substrate. Processes linear double-stranded (ds)DNA probes with 3' or 5' single-stranded overhangs or blunt ends. Has endonuclease activity on single-stranded (ss)DNA and nicking activity on dsDNA without HerA as well as 5'- and 3'-exonuclease activity on ssDNA. Binds ssDNA, dsDNA, forked and bubble DNA equally well. The chain is DNA double-strand break repair nuclease NurA from Saccharolobus solfataricus (strain ATCC 35092 / DSM 1617 / JCM 11322 / P2) (Sulfolobus solfataricus).